A 201-amino-acid polypeptide reads, in one-letter code: Large ribosomal subunit protein uL4 (201 aa).

Positions 44–68 (KAQKTRSEVAGTTKKSKKQKGGGAR) are disordered.

It belongs to the universal ribosomal protein uL4 family. Part of the 50S ribosomal subunit.

One of the primary rRNA binding proteins, this protein initially binds near the 5'-end of the 23S rRNA. It is important during the early stages of 50S assembly. It makes multiple contacts with different domains of the 23S rRNA in the assembled 50S subunit and ribosome. Functionally, forms part of the polypeptide exit tunnel. This is Large ribosomal subunit protein uL4 from Xanthomonas campestris pv. campestris (strain 8004).